A 336-amino-acid polypeptide reads, in one-letter code: Abasic site processing protein HMCES (336 aa).

C2 acts as the Nucleophile in catalysis. C2 bears the Thiazolidine linkage to a ring-opened DNA abasic site mark. Residues 26–51 (RQKCPKWRDGDTDKYQPSYNKSPQSN) are disordered. The span at 40–51 (YQPSYNKSPQSN) shows a compositional bias: polar residues. E129 is a catalytic residue. The disordered stretch occupies residues 285–336 (QNKSPKKEESRSIIQSPKLSQFGAPPKKTSAGLMQQWLKKEDGEPSPKRAKK). A compositionally biased stretch (basic and acidic residues) spans 322 to 336 (LKKEDGEPSPKRAKK).

It belongs to the SOS response-associated peptidase family. Post-translationally, ubiquitination of the hmces DNA-protein cross-link by rfwd3 may promotes its degradation.

The protein resides in the chromosome. With respect to regulation, formation and reversal of DNA-protein cross-link depends on DNA context. Catalyzes formation of the thiazolidine linkage in presence of abasic sites in single-stranded DNA. Mediates the reversal of the thiazolidine cross-link in presence of double stranded DNA. In terms of biological role, sensor of abasic sites in single-stranded DNA (ssDNA) required to preserve genome integrity by promoting error-free repair of abasic sites. Acts as an enzyme that recognizes and binds abasic sites in ssDNA at replication forks and chemically modifies the lesion by forming a covalent cross-link with DNA: forms a stable thiazolidine linkage between a ring-opened abasic site and the alpha-amino and sulfhydryl substituents of its N-terminal catalytic cysteine residue. The hmces DNA-protein cross-link is then either reversed or degraded. Hmces is able to catalyze the reversal of its thiazolidine cross-link and cycle between a cross-link and a non-cross-linked state depending on DNA context: mediates self-reversal of the thiazolidine cross-link in double stranded DNA, allowing apex1 to initiate downstream repair of abasic sites. The hmces DNA-protein cross-link can also be degraded by the sprtn metalloprotease following unfolding by the brip1/fancj helicase. Promotes error-free repair of abasic sites by protecting abasic sites from translesion synthesis (TLS) polymerases and endonucleases that are error-prone and would generate mutations and double-strand breaks. Acts as a protease: mediates autocatalytic processing of its N-terminal methionine in order to expose the catalytic cysteine. The HMCES DNA-protein cross-link is then either reversed or degraded. According to a model, the HMCES DNA-protein cross-link. In Xenopus laevis (African clawed frog), this protein is Abasic site processing protein HMCES.